Consider the following 319-residue polypeptide: MRRSRILGIGSYLPKSLVTNDELACTVETSDEWIVKRTGIRQRYIAADDQMTSDMAVEAAKLALNDSGINKQDVDLIVVATTTPDRTFPSCATIVQSKLECKNAFAFDIQAVCSGFIYAMAIADNFIKSGQVNVSLVIGAEVMSRILDWKDRSTCVLFGDGAGAVVLSNNSARNTGVISTILYSDGTLHNLLYTSGGTAYNGVAGTICMNGTVVFEHAIEKLSASIVEILNKNNLSIDEVNWFVLHQANIRIIELVARRLKIPSEKMVISINQHANTSAASIPLALSYAKNSGKLKQDDLVILAAIGAGITWGVCLVRM.

Catalysis depends on residues Cys113 and His246. Residues 247–251 are ACP-binding; sequence QANIR. Residue Asn276 is part of the active site.

It belongs to the thiolase-like superfamily. FabH family. In terms of assembly, homodimer.

Its subcellular location is the cytoplasm. It catalyses the reaction malonyl-[ACP] + acetyl-CoA + H(+) = 3-oxobutanoyl-[ACP] + CO2 + CoA. It participates in lipid metabolism; fatty acid biosynthesis. In terms of biological role, catalyzes the condensation reaction of fatty acid synthesis by the addition to an acyl acceptor of two carbons from malonyl-ACP. Catalyzes the first condensation reaction which initiates fatty acid synthesis and may therefore play a role in governing the total rate of fatty acid production. Possesses both acetoacetyl-ACP synthase and acetyl transacylase activities. Its substrate specificity determines the biosynthesis of branched-chain and/or straight-chain of fatty acids. The polypeptide is Beta-ketoacyl-[acyl-carrier-protein] synthase III (Ehrlichia ruminantium (strain Gardel)).